Consider the following 372-residue polypeptide: Phenylalanine--tRNA ligase alpha subunit (372 aa).

Glu-276 lines the Mg(2+) pocket.

The protein belongs to the class-II aminoacyl-tRNA synthetase family. Phe-tRNA synthetase alpha subunit type 1 subfamily. Tetramer of two alpha and two beta subunits. The cofactor is Mg(2+).

Its subcellular location is the cytoplasm. It carries out the reaction tRNA(Phe) + L-phenylalanine + ATP = L-phenylalanyl-tRNA(Phe) + AMP + diphosphate + H(+). The polypeptide is Phenylalanine--tRNA ligase alpha subunit (Thermobifida fusca (strain YX)).